Reading from the N-terminus, the 140-residue chain is Large ribosomal subunit protein uL15 (140 aa).

Residues 1–32 are disordered; that stretch reads MDTKKFRGSRTCGGGTHKNRRGAGNRGGRGKA.

Belongs to the universal ribosomal protein uL15 family. In terms of assembly, part of the 50S ribosomal subunit.

In terms of biological role, binds to the 23S rRNA. The protein is Large ribosomal subunit protein uL15 of Methanosarcina acetivorans (strain ATCC 35395 / DSM 2834 / JCM 12185 / C2A).